The following is a 394-amino-acid chain: Protein TsgA homolog (394 aa).

The next 12 membrane-spanning stretches (helical) occupy residues 11 to 31, 51 to 71, 76 to 96, 101 to 121, 134 to 154, 162 to 182, 206 to 226, 246 to 266, 274 to 294, 302 to 322, 334 to 354, and 363 to 383; these read WISY…GIVM, FLNA…EIIP, LVFG…GHNL, ISMF…TFLV, LLFT…AAAM, WYWV…LTLC, VGVL…LGFI, QLVS…SFIL, IVTV…STDN, ILAL…LGSL, FILT…GPIV, and LATA…LGFF.

This sequence belongs to the major facilitator superfamily. TsgA family.

The protein localises to the cell inner membrane. This Yersinia pseudotuberculosis serotype O:1b (strain IP 31758) protein is Protein TsgA homolog.